A 322-amino-acid polypeptide reads, in one-letter code: Allergen Asp f 4 (322 aa).

The N-terminal stretch at 1 to 20 is a signal peptide; that stretch reads MQLKNSMLLLTALAAGSSVA. The segment covering 80 to 105 has biased composition (low complexity); it reads AAAAAASTPEPSSSHSDSSSSSGVSA. The tract at residues 80–109 is disordered; it reads AAAAAASTPEPSSSHSDSSSSSGVSADWTN.

Its subcellular location is the secreted. The protein is Allergen Asp f 4 of Aspergillus fumigatus (strain ATCC MYA-4609 / CBS 101355 / FGSC A1100 / Af293) (Neosartorya fumigata).